Reading from the N-terminus, the 417-residue chain is Serine hydroxymethyltransferase (417 aa).

Residues Leu-120 and 124–126 (GHL) contribute to the (6S)-5,6,7,8-tetrahydrofolate site. Lys-229 is subject to N6-(pyridoxal phosphate)lysine. Residue 354-356 (SPF) participates in (6S)-5,6,7,8-tetrahydrofolate binding.

This sequence belongs to the SHMT family. Homodimer. It depends on pyridoxal 5'-phosphate as a cofactor.

The protein resides in the cytoplasm. The enzyme catalyses (6R)-5,10-methylene-5,6,7,8-tetrahydrofolate + glycine + H2O = (6S)-5,6,7,8-tetrahydrofolate + L-serine. The protein operates within one-carbon metabolism; tetrahydrofolate interconversion. Its pathway is amino-acid biosynthesis; glycine biosynthesis; glycine from L-serine: step 1/1. Functionally, catalyzes the reversible interconversion of serine and glycine with tetrahydrofolate (THF) serving as the one-carbon carrier. This reaction serves as the major source of one-carbon groups required for the biosynthesis of purines, thymidylate, methionine, and other important biomolecules. Also exhibits THF-independent aldolase activity toward beta-hydroxyamino acids, producing glycine and aldehydes, via a retro-aldol mechanism. The sequence is that of Serine hydroxymethyltransferase from Acinetobacter baylyi (strain ATCC 33305 / BD413 / ADP1).